A 189-amino-acid polypeptide reads, in one-letter code: Probable thymidylate kinase 1 (189 aa).

Glycine 9–threonine 16 contributes to the ATP binding site.

Belongs to the thymidylate kinase family.

The catalysed reaction is dTMP + ATP = dTDP + ADP. The polypeptide is Probable thymidylate kinase 1 (tmk1) (Saccharolobus solfataricus (strain ATCC 35092 / DSM 1617 / JCM 11322 / P2) (Sulfolobus solfataricus)).